A 244-amino-acid polypeptide reads, in one-letter code: Lactate utilization protein A (244 aa).

It belongs to the LutA/YkgE family.

Is involved in L-lactate degradation and allows cells to grow with lactate as the sole carbon source. This Halalkalibacterium halodurans (strain ATCC BAA-125 / DSM 18197 / FERM 7344 / JCM 9153 / C-125) (Bacillus halodurans) protein is Lactate utilization protein A.